The primary structure comprises 214 residues: Probable GTP-binding protein EngB (214 aa).

An EngB-type G domain is found at 40–212 (SLPEIVFVGK…KASFAQCIKH (173 aa)). Residues 48–55 (GKSNVGKS), 75–79 (GRTRQ), 93–96 (DLPG), 160–163 (TKSD), and 191–193 (VSS) contribute to the GTP site. The Mg(2+) site is built by Ser-55 and Thr-77.

Belongs to the TRAFAC class TrmE-Era-EngA-EngB-Septin-like GTPase superfamily. EngB GTPase family. Mg(2+) serves as cofactor.

In terms of biological role, necessary for normal cell division and for the maintenance of normal septation. This Rickettsia prowazekii (strain Madrid E) protein is Probable GTP-binding protein EngB.